A 131-amino-acid polypeptide reads, in one-letter code: Lysosomal enzyme trafficking factor (131 aa).

2 helical membrane passes run Met-8–Phe-28 and Leu-66–Leu-86.

This sequence belongs to the LYSET family.

The protein localises to the golgi apparatus membrane. In terms of biological role, required for mannose-6-phosphate-dependent trafficking of lysosomal enzymes. LYSET bridges GlcNAc-1-phosphate transferase (GNPTAB), to the membrane-bound transcription factor site-1 protease (MBTPS1), thus allowing proteolytic activation of the GNPTAB. GNPTAB is involved in the regulation of M6P-dependent Golgi-to-lysosome trafficking of lysosomal enzymes. LYSET is thus an essential factor for maturation and delivery of lysosomal hydrolases. This chain is Lysosomal enzyme trafficking factor (lyset-a), found in Xenopus laevis (African clawed frog).